We begin with the raw amino-acid sequence, 297 residues long: Phosphoribosylaminoimidazole-succinocarboxamide synthase (297 aa).

This sequence belongs to the SAICAR synthetase family.

The catalysed reaction is 5-amino-1-(5-phospho-D-ribosyl)imidazole-4-carboxylate + L-aspartate + ATP = (2S)-2-[5-amino-1-(5-phospho-beta-D-ribosyl)imidazole-4-carboxamido]succinate + ADP + phosphate + 2 H(+). The protein operates within purine metabolism; IMP biosynthesis via de novo pathway; 5-amino-1-(5-phospho-D-ribosyl)imidazole-4-carboxamide from 5-amino-1-(5-phospho-D-ribosyl)imidazole-4-carboxylate: step 1/2. This is Phosphoribosylaminoimidazole-succinocarboxamide synthase from Mycobacterium tuberculosis (strain ATCC 25177 / H37Ra).